The sequence spans 503 residues: ATP synthase subunit alpha (503 aa).

Residue 170–177 (GDKQTGKT) coordinates ATP.

Belongs to the ATPase alpha/beta chains family. As to quaternary structure, F-type ATPases have 2 components, CF(1) - the catalytic core - and CF(0) - the membrane proton channel. CF(1) has five subunits: alpha(3), beta(3), gamma(1), delta(1), epsilon(1). CF(0) has three main subunits: a(1), b(2) and c(9-12). The alpha and beta chains form an alternating ring which encloses part of the gamma chain. CF(1) is attached to CF(0) by a central stalk formed by the gamma and epsilon chains, while a peripheral stalk is formed by the delta and b chains.

It is found in the cell inner membrane. It catalyses the reaction ATP + H2O + 4 H(+)(in) = ADP + phosphate + 5 H(+)(out). Produces ATP from ADP in the presence of a proton gradient across the membrane. The alpha chain is a regulatory subunit. The sequence is that of ATP synthase subunit alpha from Helicobacter pylori (strain Shi470).